The primary structure comprises 258 residues: MILDKIVAATKVRVEKAKLQKSFKTAKREALLNKKKNFVSFKKALSKAGINFICEVKKASPSKGLISTDFKYKEIALEYEKTGAAAISVLTEPNFFLGSIRYLQEIKSIVKIPVLRKDFIIDSYQIYESRVIGADAVLLICAVLSYDVLKEFLETAQGLGMSCLVEAHNEEEIETALKAGAEIIGVNNRNLRTFEVDFGNSMKLRRLVPVDKIFVSESGIKTKKHIDILKANDVNAVLIGEELMKSGNIAERLRELKD.

It belongs to the TrpC family.

It carries out the reaction 1-(2-carboxyphenylamino)-1-deoxy-D-ribulose 5-phosphate + H(+) = (1S,2R)-1-C-(indol-3-yl)glycerol 3-phosphate + CO2 + H2O. It participates in amino-acid biosynthesis; L-tryptophan biosynthesis; L-tryptophan from chorismate: step 4/5. The polypeptide is Indole-3-glycerol phosphate synthase (Endomicrobium trichonymphae).